A 191-amino-acid chain; its full sequence is dCTP deaminase (191 aa).

DCTP is bound by residues 112–117, 136–138, Gln-157, Tyr-173, and Gln-183; these read KSTYAR and TLE. The Proton donor/acceptor role is filled by Glu-138.

This sequence belongs to the dCTP deaminase family. In terms of assembly, homotrimer.

It carries out the reaction dCTP + H2O + H(+) = dUTP + NH4(+). It functions in the pathway pyrimidine metabolism; dUMP biosynthesis; dUMP from dCTP (dUTP route): step 1/2. Its function is as follows. Catalyzes the deamination of dCTP to dUTP. The protein is dCTP deaminase of Psychrobacter arcticus (strain DSM 17307 / VKM B-2377 / 273-4).